The following is a 297-amino-acid chain: Formylmethanofuran--tetrahydromethanopterin formyltransferase (297 aa).

This sequence belongs to the FTR family. Homotetramer.

Its subcellular location is the cytoplasm. The catalysed reaction is N-formylmethanofuran + 5,6,7,8-tetrahydromethanopterin + H(+) = N(5)-formyl-5,6,7,8-tetrahydromethanopterin + methanofuran. Its pathway is one-carbon metabolism; methanogenesis from CO(2); 5,10-methenyl-5,6,7,8-tetrahydromethanopterin from CO(2): step 2/3. Its function is as follows. Catalyzes the reversible transfer of a formyl group from formylmethanofuran (formyl-MFR) to tetrahydromethanopterin (H(4)MPT) to produce 5-formyl tetrahydromethanopterin (5-formyl-H(4)MPT) and methanofuran (MFR). The chain is Formylmethanofuran--tetrahydromethanopterin formyltransferase from Methanothermobacter thermautotrophicus (strain ATCC 29096 / DSM 1053 / JCM 10044 / NBRC 100330 / Delta H) (Methanobacterium thermoautotrophicum).